A 445-amino-acid chain; its full sequence is Phosphoglucosamine mutase (445 aa).

Catalysis depends on Ser102, which acts as the Phosphoserine intermediate. Mg(2+) contacts are provided by Ser102, Asp241, Asp243, and Asp245. At Ser102 the chain carries Phosphoserine.

Belongs to the phosphohexose mutase family. It depends on Mg(2+) as a cofactor. In terms of processing, activated by phosphorylation.

It carries out the reaction alpha-D-glucosamine 1-phosphate = D-glucosamine 6-phosphate. Its function is as follows. Catalyzes the conversion of glucosamine-6-phosphate to glucosamine-1-phosphate. The sequence is that of Phosphoglucosamine mutase from Haemophilus influenzae (strain 86-028NP).